Reading from the N-terminus, the 56-residue chain is Large ribosomal subunit protein bL33A (56 aa).

The protein belongs to the bacterial ribosomal protein bL33 family.

This chain is Large ribosomal subunit protein bL33A, found in Nocardia farcinica (strain IFM 10152).